A 62-amino-acid chain; its full sequence is Enterocin E-760 (62 aa).

The protein localises to the secreted. Functionally, bacteriocin active against the Gram-negative bacteria S.enteritidis, S.choleraesuis, S.typhimurium, S.gallinarum, E.coli O157:H7, Y.enterocolitica, C.freundii, K.pneumoniae, S.dysentriae, P.aeruginosa, P.mirabilis, M.morganii, C.jejuni and 20 other Campylobacter isolates, and the Gram-positive bacteria S.aureus, S.epidermidis and L.monocytogenes. The sequence is that of Enterocin E-760 from Enterococcus sp.